Consider the following 273-residue polypeptide: Energy-coupling factor transporter ATP-binding protein EcfA (273 aa).

Residues 2–237 (ISIRDLTYFY…RASLLALGLA (236 aa)) enclose the ABC transporter domain. 36–43 (GRNGSGKS) is a binding site for ATP.

This sequence belongs to the ABC transporter superfamily. Energy-coupling factor EcfA family. As to quaternary structure, forms a stable energy-coupling factor (ECF) transporter complex composed of 2 membrane-embedded substrate-binding proteins (S component), 2 ATP-binding proteins (A component) and 2 transmembrane proteins (T component).

The protein resides in the cell membrane. In terms of biological role, ATP-binding (A) component of a common energy-coupling factor (ECF) ABC-transporter complex. Unlike classic ABC transporters this ECF transporter provides the energy necessary to transport a number of different substrates. The protein is Energy-coupling factor transporter ATP-binding protein EcfA of Syntrophomonas wolfei subsp. wolfei (strain DSM 2245B / Goettingen).